A 188-amino-acid polypeptide reads, in one-letter code: Acireductone dioxygenase (188 aa).

Residues 1-20 (MSRLRIFADSNPTTPHFDSR) form a disordered region. The Fe(2+) site is built by histidine 97, histidine 99, glutamate 103, and histidine 141. Positions 97, 99, 103, and 141 each coordinate Ni(2+).

Belongs to the acireductone dioxygenase (ARD) family. In terms of assembly, monomer. It depends on Fe(2+) as a cofactor. Requires Ni(2+) as cofactor.

It catalyses the reaction 1,2-dihydroxy-5-(methylsulfanyl)pent-1-en-3-one + O2 = 3-(methylsulfanyl)propanoate + CO + formate + 2 H(+). The enzyme catalyses 1,2-dihydroxy-5-(methylsulfanyl)pent-1-en-3-one + O2 = 4-methylsulfanyl-2-oxobutanoate + formate + 2 H(+). Its pathway is amino-acid biosynthesis; L-methionine biosynthesis via salvage pathway; L-methionine from S-methyl-5-thio-alpha-D-ribose 1-phosphate: step 5/6. Functionally, catalyzes 2 different reactions between oxygen and the acireductone 1,2-dihydroxy-3-keto-5-methylthiopentene (DHK-MTPene) depending upon the metal bound in the active site. Fe-containing acireductone dioxygenase (Fe-ARD) produces formate and 2-keto-4-methylthiobutyrate (KMTB), the alpha-ketoacid precursor of methionine in the methionine recycle pathway. Ni-containing acireductone dioxygenase (Ni-ARD) produces methylthiopropionate, carbon monoxide and formate, and does not lie on the methionine recycle pathway. The chain is Acireductone dioxygenase from Xanthomonas campestris pv. campestris (strain 8004).